A 492-amino-acid chain; its full sequence is Tyrosinase-like protein 1 (492 aa).

The N-terminal stretch at 1 to 22 (MDKMRTLQSLIVKLTLLYGALC) is a signal peptide. Positions 147, 155, 164, 289, 293, and 316 each coordinate Cu cation. Residues 472 to 492 (SEPPLQLEGPSFTSSFDDPRI) form a disordered region. Positions 482 to 492 (SFTSSFDDPRI) are enriched in polar residues.

Cu(2+) serves as cofactor. In terms of tissue distribution, prismatic layer of shell (at protein level). Expressed primarily in the mantle with highest level in the mantle edge and lower level in the mantle pallium.

The protein resides in the secreted. This chain is Tyrosinase-like protein 1, found in Margaritifera margaritifera (Freshwater pearl mussel).